Consider the following 214-residue polypeptide: 3-isopropylmalate dehydratase small subunit (214 aa).

Belongs to the LeuD family. LeuD type 1 subfamily. As to quaternary structure, heterodimer of LeuC and LeuD.

The enzyme catalyses (2R,3S)-3-isopropylmalate = (2S)-2-isopropylmalate. The protein operates within amino-acid biosynthesis; L-leucine biosynthesis; L-leucine from 3-methyl-2-oxobutanoate: step 2/4. Its function is as follows. Catalyzes the isomerization between 2-isopropylmalate and 3-isopropylmalate, via the formation of 2-isopropylmaleate. In Methylobacillus flagellatus (strain ATCC 51484 / DSM 6875 / VKM B-1610 / KT), this protein is 3-isopropylmalate dehydratase small subunit.